The following is a 313-amino-acid chain: Ribosomal RNA small subunit methyltransferase H (313 aa).

S-adenosyl-L-methionine is bound by residues 35 to 37 (GGH), D55, F79, D101, and Q108.

The protein belongs to the methyltransferase superfamily. RsmH family.

It localises to the cytoplasm. The catalysed reaction is cytidine(1402) in 16S rRNA + S-adenosyl-L-methionine = N(4)-methylcytidine(1402) in 16S rRNA + S-adenosyl-L-homocysteine + H(+). In terms of biological role, specifically methylates the N4 position of cytidine in position 1402 (C1402) of 16S rRNA. The polypeptide is Ribosomal RNA small subunit methyltransferase H (Escherichia coli O81 (strain ED1a)).